The chain runs to 466 residues: Soluble pyridine nucleotide transhydrogenase (466 aa).

Residue 36–45 participates in FAD binding; it reads ERYHQVGGGC.

It belongs to the class-I pyridine nucleotide-disulfide oxidoreductase family. The cofactor is FAD.

It is found in the cytoplasm. It catalyses the reaction NAD(+) + NADPH = NADH + NADP(+). Functionally, conversion of NADPH, generated by peripheral catabolic pathways, to NADH, which can enter the respiratory chain for energy generation. The sequence is that of Soluble pyridine nucleotide transhydrogenase from Colwellia psychrerythraea (strain 34H / ATCC BAA-681) (Vibrio psychroerythus).